The following is a 98-amino-acid chain: NADH-ubiquinone oxidoreductase chain 4L (98 aa).

3 helical membrane passes run 1-21 (MSMV…GLLM), 29-49 (SLLC…VTIL), and 61-81 (IILL…LVMV).

The protein belongs to the complex I subunit 4L family. In terms of assembly, core subunit of respiratory chain NADH dehydrogenase (Complex I) which is composed of 45 different subunits.

It is found in the mitochondrion inner membrane. The catalysed reaction is a ubiquinone + NADH + 5 H(+)(in) = a ubiquinol + NAD(+) + 4 H(+)(out). Core subunit of the mitochondrial membrane respiratory chain NADH dehydrogenase (Complex I) which catalyzes electron transfer from NADH through the respiratory chain, using ubiquinone as an electron acceptor. Part of the enzyme membrane arm which is embedded in the lipid bilayer and involved in proton translocation. The sequence is that of NADH-ubiquinone oxidoreductase chain 4L (MT-ND4L) from Halichoerus grypus (Gray seal).